A 357-amino-acid polypeptide reads, in one-letter code: MIETDKLAAKAVSAERLISASPASPNEEAFERALRPKLLDEYVGQEKVRGQLDIFMTAAKKRREALDHVLLFGPPGLGKTTLAHIIAREMGVNLRQTSGPVLERPGDLAALLTNLEANDVLFIDEIHRLSPVVEEILYPALEDYQIDIMIGEGPAARSVKLDLQPFTLVGATTRAGMLTNPLRDRFGIVARLEFYTPTELARIVTRSAGLLDARIAEDGALEIAKRSRGTPRIANRLLRRVRDYAEVKADGVITRAVADAALAMLDVDAVGFDLMDRKLLEAILHKFNGGPVGIDNLAAAIGEERDTIEDVLEPYLIQQGYLQRTPRGRVATASAYQHFGLGAPKTGPARDLWDNNA.

The interval 4 to 195 is large ATPase domain (RuvB-L); that stretch reads TDKLAAKAVS…FGIVARLEFY (192 aa). Residues leucine 34, arginine 35, glycine 76, lysine 79, threonine 80, threonine 81, 142–144, arginine 185, tyrosine 195, and arginine 232 each bind ATP; that span reads EDY. Position 80 (threonine 80) interacts with Mg(2+). Residues 196 to 266 form a small ATPAse domain (RuvB-S) region; that stretch reads TPTELARIVT…VADAALAMLD (71 aa). The segment at 269 to 357 is head domain (RuvB-H); that stretch reads AVGFDLMDRK…PARDLWDNNA (89 aa). The DNA site is built by arginine 305, arginine 324, and arginine 329.

Belongs to the RuvB family. As to quaternary structure, homohexamer. Forms an RuvA(8)-RuvB(12)-Holliday junction (HJ) complex. HJ DNA is sandwiched between 2 RuvA tetramers; dsDNA enters through RuvA and exits via RuvB. An RuvB hexamer assembles on each DNA strand where it exits the tetramer. Each RuvB hexamer is contacted by two RuvA subunits (via domain III) on 2 adjacent RuvB subunits; this complex drives branch migration. In the full resolvosome a probable DNA-RuvA(4)-RuvB(12)-RuvC(2) complex forms which resolves the HJ.

The protein localises to the cytoplasm. It carries out the reaction ATP + H2O = ADP + phosphate + H(+). Functionally, the RuvA-RuvB-RuvC complex processes Holliday junction (HJ) DNA during genetic recombination and DNA repair, while the RuvA-RuvB complex plays an important role in the rescue of blocked DNA replication forks via replication fork reversal (RFR). RuvA specifically binds to HJ cruciform DNA, conferring on it an open structure. The RuvB hexamer acts as an ATP-dependent pump, pulling dsDNA into and through the RuvAB complex. RuvB forms 2 homohexamers on either side of HJ DNA bound by 1 or 2 RuvA tetramers; 4 subunits per hexamer contact DNA at a time. Coordinated motions by a converter formed by DNA-disengaged RuvB subunits stimulates ATP hydrolysis and nucleotide exchange. Immobilization of the converter enables RuvB to convert the ATP-contained energy into a lever motion, pulling 2 nucleotides of DNA out of the RuvA tetramer per ATP hydrolyzed, thus driving DNA branch migration. The RuvB motors rotate together with the DNA substrate, which together with the progressing nucleotide cycle form the mechanistic basis for DNA recombination by continuous HJ branch migration. Branch migration allows RuvC to scan DNA until it finds its consensus sequence, where it cleaves and resolves cruciform DNA. The chain is Holliday junction branch migration complex subunit RuvB from Ralstonia nicotianae (strain ATCC BAA-1114 / GMI1000) (Ralstonia solanacearum).